Reading from the N-terminus, the 351-residue chain is SLAM family member 6 (351 aa).

An N-terminal signal peptide occupies residues 1–30 (MAVSRAPAPDSACQRMVWLFPLVFCLGSGS). The Extracellular portion of the chain corresponds to 31 to 239 (EVSQSSSDPQ…KGVLTNPPWN (209 aa)). The region spanning 36–130 (SSDPQLMNGV…YTAQITTKDS (95 aa)) is the Ig-like V-type domain. N-linked (GlcNAc...) asparagine glycosylation is found at asparagine 82, asparagine 101, asparagine 112, asparagine 152, asparagine 159, asparagine 172, asparagine 186, asparagine 193, and asparagine 218. The region spanning 147-210 (NLETTNYTLL…RNSGDQTYVC (64 aa)) is the Ig-like C2-type domain. 2 disulfides stabilise this stretch: cysteine 162-cysteine 229 and cysteine 168-cysteine 210. The chain crosses the membrane as a helical span at residues 240–262 (AVWFMTTISIISAVILIFVCWSI). At 263-351 (HVWKRRGSLP…KVNTLINYNS (89 aa)) the chain is on the cytoplasmic side. The disordered stretch occupies residues 272–295 (PLTSQHPESSQSTDGPGSPGNTVY). Short sequence motifs (ITSM) lie at residues 293–298 (TVYAQV) and 317–322 (TIYSIV). Tyrosine 319 bears the Phosphotyrosine mark.

In terms of assembly, homodimer. Interacts with PTN6 and, upon phosphorylation, with PTN11 and SH2D1A/SAP. In terms of processing, phosphorylated. As to expression, expressed on hematopoietic cells. Isoform 3 is expressed in thymocytes and B lymphocytes of C57Bl/6 strain.

The protein localises to the cell membrane. Self-ligand receptor of the signaling lymphocytic activation molecule (SLAM) family. SLAM receptors triggered by homo- or heterotypic cell-cell interactions are modulating the activation and differentiation of a wide variety of immune cells and thus are involved in the regulation and interconnection of both innate and adaptive immune response. Activities are controlled by presence or absence of small cytoplasmic adapter proteins, SH2D1A/SAP and/or SH2D1B/EAT-2. Triggers cytolytic activity only in natural killer cells (NK) expressing high surface densities of natural cytotoxicity receptors. Positive signaling in NK cells implicates phosphorylation of VAV1. NK cell activation seems to depend on SH2D1B and not on SH2D1A. In conjunction with SLAMF1 controls the transition between positive selection and the subsequent expansion and differentiation of the thymocytic natural killer T (NKT) cell lineage. Promotes T cell differentiation into a helper T-cell Th17 phenotype leading to increased IL-17 secretion; the costimulatory activity requires SH2D1A. Promotes recruitment of RORC to the IL-17 promoter. In conjunction with SLAMF1 and CD84/SLAMF5 may be a negative regulator of the humoral immune response. In the absence of SH2D1A/SAP can transmit negative signals to CD4(+) T-cells and NKT cells. Negatively regulates germinal center formation by inhibiting T-cell:B-cell adhesion; the function probably implicates increased association with PTPN6/SHP-1 via ITSMs in absence of SH2D1A/SAP. However, reported to mediated T-cell adhesion, to participate in stable T-cell:B-cell interactions and to be involved in maintaining B-cell tolerance in germinal centers and in preventing autoimmunity. Involved in regulation of autoimmunity. Isoform 3 may be suppressor of pathogenic T-cell proliferation. The sequence is that of SLAM family member 6 (Slamf6) from Mus musculus (Mouse).